Here is a 387-residue protein sequence, read N- to C-terminus: UDP-Gal:alpha-D-GlcNAc-diphosphoundecaprenol alpha-1,3-galactosyltransferase (387 aa).

This sequence belongs to the glycosyltransferase group 1 family. Glycosyltransferase 4 subfamily. Requires Mg(2+) as cofactor. Mn(2+) serves as cofactor. It depends on Fe(2+) as a cofactor.

It carries out the reaction N-acetyl-alpha-D-glucosaminyl-di-trans,octa-cis-undecaprenyl diphosphate + UDP-alpha-D-galactose = alpha-D-Gal-(1-&gt;3)-alpha-D-GlcNAc-di-trans,octa-cis-undecaprenyl diphosphate + UDP + H(+). It functions in the pathway bacterial outer membrane biogenesis; LPS O-antigen biosynthesis. In terms of biological role, involved in the biosynthesis of the lipopolysaccharide (LPS) O-antigen region. Catalyzes the transfer of galactose from UDP-galactose to GlcNAc-undecaprenyl diphosphate via an alpha1,3-linkage. Has strict substrate specificity. The polypeptide is UDP-Gal:alpha-D-GlcNAc-diphosphoundecaprenol alpha-1,3-galactosyltransferase (Escherichia coli).